The sequence spans 273 residues: Ribonuclease PH (273 aa).

Phosphate-binding positions include Arg-86 and Gly-124 to Arg-126. Positions Gly-254–Leu-273 are disordered.

The protein belongs to the RNase PH family. Homohexameric ring arranged as a trimer of dimers.

The enzyme catalyses tRNA(n+1) + phosphate = tRNA(n) + a ribonucleoside 5'-diphosphate. Its function is as follows. Phosphorolytic 3'-5' exoribonuclease that plays an important role in tRNA 3'-end maturation. Removes nucleotide residues following the 3'-CCA terminus of tRNAs; can also add nucleotides to the ends of RNA molecules by using nucleoside diphosphates as substrates, but this may not be physiologically important. Probably plays a role in initiation of 16S rRNA degradation (leading to ribosome degradation) during starvation. The chain is Ribonuclease PH from Symbiobacterium thermophilum (strain DSM 24528 / JCM 14929 / IAM 14863 / T).